Reading from the N-terminus, the 463-residue chain is Cysteine--tRNA ligase (463 aa).

Cys27 serves as a coordination point for Zn(2+). A 'HIGH' region motif is present at residues 29–39 (ATVQGLPHIGH). Zn(2+) is bound by residues Cys205, His230, and Glu234. The 'KMSKS' region motif lies at 261 to 265 (KMSKS). An ATP-binding site is contributed by Lys264.

This sequence belongs to the class-I aminoacyl-tRNA synthetase family. In terms of assembly, monomer. Requires Zn(2+) as cofactor.

Its subcellular location is the cytoplasm. It catalyses the reaction tRNA(Cys) + L-cysteine + ATP = L-cysteinyl-tRNA(Cys) + AMP + diphosphate. The sequence is that of Cysteine--tRNA ligase from Mycolicibacterium vanbaalenii (strain DSM 7251 / JCM 13017 / BCRC 16820 / KCTC 9966 / NRRL B-24157 / PYR-1) (Mycobacterium vanbaalenii).